The sequence spans 396 residues: Protein-export membrane protein SecD (396 aa).

The next 6 helical transmembrane spans lie at 12-32 (ILIL…KGLD), 243-263 (LKGT…IVSI), 272-292 (IPIL…ASLI), 298-318 (LPSI…QIVI), 338-358 (FFII…LFVL), and 360-380 (VGML…GIFI).

Belongs to the SecD/SecF family. SecD subfamily. In terms of assembly, part of the protein translocation apparatus. Forms a complex with SecF.

The protein localises to the cell membrane. Functionally, involved in protein export. In Methanocaldococcus jannaschii (strain ATCC 43067 / DSM 2661 / JAL-1 / JCM 10045 / NBRC 100440) (Methanococcus jannaschii), this protein is Protein-export membrane protein SecD.